Reading from the N-terminus, the 245-residue chain is tRNA pseudouridine synthase A (245 aa).

The active-site Nucleophile is the Asp-52. Tyr-111 contacts substrate.

It belongs to the tRNA pseudouridine synthase TruA family. Homodimer.

It catalyses the reaction uridine(38/39/40) in tRNA = pseudouridine(38/39/40) in tRNA. Its function is as follows. Formation of pseudouridine at positions 38, 39 and 40 in the anticodon stem and loop of transfer RNAs. In Ehrlichia chaffeensis (strain ATCC CRL-10679 / Arkansas), this protein is tRNA pseudouridine synthase A.